Here is a 168-residue protein sequence, read N- to C-terminus: Phosphopantetheine adenylyltransferase (168 aa).

Thr-9 contributes to the substrate binding site. ATP is bound by residues 9 to 10 (TF) and His-17. Residues Lys-41, Leu-73, and Arg-87 each coordinate substrate. ATP contacts are provided by residues 88 to 90 (GLR), Glu-98, and 123 to 129 (YQFISGT).

Belongs to the bacterial CoaD family. In terms of assembly, homohexamer. Mg(2+) is required as a cofactor.

Its subcellular location is the cytoplasm. The enzyme catalyses (R)-4'-phosphopantetheine + ATP + H(+) = 3'-dephospho-CoA + diphosphate. It participates in cofactor biosynthesis; coenzyme A biosynthesis; CoA from (R)-pantothenate: step 4/5. In terms of biological role, reversibly transfers an adenylyl group from ATP to 4'-phosphopantetheine, yielding dephospho-CoA (dPCoA) and pyrophosphate. This is Phosphopantetheine adenylyltransferase from Ralstonia nicotianae (strain ATCC BAA-1114 / GMI1000) (Ralstonia solanacearum).